The primary structure comprises 410 residues: MCPTAVPSRVSPVAAAAAADIAGSSESTVSLVADVDKKNSQYKQIFLERFRKKLQSDKTGMNNLESFVELPEGVAPSAASIGPIKRGSEPLPPWIKLKVPKGMTHRPRFNRIRRSMREKNLSTVCEEAKCPNIGECWGGSDEEGTATATIMVMGSHCTRGCRFCSVLTSRRPPPLDPEEPEKVAAAVHEMGVDYIVMTMVDRDDLPDGGASHVCCCIHTIKKKNPELMLEALVGDFHGDLKLVEQLAVTPLSVYAHNIECVERITPRVRDRRASYRQSLQTLEHVTKWTNGNMLTKSSIMLGLGEEEAEVRQTLRDLRTAGVSAVTLGQYLQPSHTRLKVSRYAHPKEFEMWEKEAMDMGFLYCASGPMVRSSYRAGEYYIKNILKQRQSAEGGKAAAAATAVNAGTAIA.

7 residues coordinate [4Fe-4S] cluster: cysteine 125, cysteine 130, cysteine 136, cysteine 157, cysteine 161, cysteine 164, and serine 373. Residues 140–362 (SDEEGTATAT…EKEAMDMGFL (223 aa)) form the Radical SAM core domain.

It belongs to the radical SAM superfamily. Lipoyl synthase family. [4Fe-4S] cluster serves as cofactor.

Its subcellular location is the mitochondrion. The catalysed reaction is [[Fe-S] cluster scaffold protein carrying a second [4Fe-4S](2+) cluster] + N(6)-octanoyl-L-lysyl-[protein] + 2 oxidized [2Fe-2S]-[ferredoxin] + 2 S-adenosyl-L-methionine + 4 H(+) = [[Fe-S] cluster scaffold protein] + N(6)-[(R)-dihydrolipoyl]-L-lysyl-[protein] + 4 Fe(3+) + 2 hydrogen sulfide + 2 5'-deoxyadenosine + 2 L-methionine + 2 reduced [2Fe-2S]-[ferredoxin]. It functions in the pathway protein modification; protein lipoylation via endogenous pathway; protein N(6)-(lipoyl)lysine from octanoyl-[acyl-carrier-protein]: step 2/2. In terms of biological role, catalyzes the radical-mediated insertion of two sulfur atoms into the C-6 and C-8 positions of the octanoyl moiety bound to the lipoyl domains of lipoate-dependent enzymes, thereby converting the octanoylated domains into lipoylated derivatives. This is Lipoyl synthase, mitochondrial from Leishmania major.